A 129-amino-acid polypeptide reads, in one-letter code: Glycine cleavage system H protein (129 aa).

The region spanning 24 to 106 is the Lipoyl-binding domain; it reads IAVIGISAYA…YEQGWLLKVQ (83 aa). Lys65 carries the post-translational modification N6-lipoyllysine.

The protein belongs to the GcvH family. In terms of assembly, the glycine cleavage system is composed of four proteins: P, T, L and H. It depends on (R)-lipoate as a cofactor.

Its function is as follows. The glycine cleavage system catalyzes the degradation of glycine. The H protein shuttles the methylamine group of glycine from the P protein to the T protein. The chain is Glycine cleavage system H protein from Synechococcus elongatus (strain ATCC 33912 / PCC 7942 / FACHB-805) (Anacystis nidulans R2).